Consider the following 993-residue polypeptide: Ephrin type-B receptor 3 (993 aa).

An N-terminal signal peptide occupies residues 1–29 (MAGARPPPGLLPLLAPLLLPLLLPAGCWA). Topologically, residues 30–554 (LEETLMDTKW…AQQLQEQLPL (525 aa)) are extracellular. One can recognise an Eph LBD domain in the interval 31-209 (EETLMDTKWV…FYKKCASTTA (179 aa)). Cys73 and Cys191 are joined by a disulfide. 2 Fibronectin type-III domains span residues 331-446 (VPSP…TNQA) and 447-540 (APSE…TTSE). 2 N-linked (GlcNAc...) asparagine glycosylation sites follow: Asn343 and Asn440. A helical membrane pass occupies residues 555-575 (IVGSTVAGFVFMVVVVVIALV). The Cytoplasmic portion of the chain corresponds to 576–993 (CLRKQRHGPD…QMNQTLPVQV (418 aa)). Tyr609 bears the Phosphotyrosine; by autocatalysis mark. The Protein kinase domain occupies 628-891 (VKIEEVIGAG…QIVNTLDKLI (264 aa)). ATP is bound by residues 634–642 (IGAGEFGEV) and Lys660. Asp753 functions as the Proton acceptor in the catalytic mechanism. One can recognise an SAM domain in the interval 920-984 (TTFTTVGDWL…LCSIQDMRLQ (65 aa)). Residues 991 to 993 (VQV) carry the PDZ-binding motif.

Belongs to the protein kinase superfamily. Tyr protein kinase family. Ephrin receptor subfamily. In terms of assembly, heterotetramer upon binding of the ligand. The heterotetramer is composed of an ephrin dimer and a receptor dimer. Oligomerization is probably required to induce biological responses. Post-translationally, phosphorylated. Autophosphorylates upon ligand-binding. Autophosphorylation on Tyr-609 is required for interaction with SH2 domain-containing proteins. Ubiquitinated by RNF186, mainly through 'Lys-48' and 'Lys-63'-linked polyubiquitin chains. In terms of tissue distribution, expressed in cells of the retinal ganglion cell layer during retinal axon guidance to the optic disk. Expressed by Paneth and progenitor cells in the crypts of the intestinal epithelium (at protein level). Expressed in myogenic progenitor cells.

It is found in the cell membrane. Its subcellular location is the cell projection. The protein localises to the dendrite. It carries out the reaction L-tyrosyl-[protein] + ATP = O-phospho-L-tyrosyl-[protein] + ADP + H(+). Its function is as follows. Receptor tyrosine kinase which binds promiscuously transmembrane ephrin-B family ligands residing on adjacent cells, leading to contact-dependent bidirectional signaling into neighboring cells. The signaling pathway downstream of the receptor is referred to as forward signaling while the signaling pathway downstream of the ephrin ligand is referred to as reverse signaling. Generally has an overlapping and redundant function with EPHB2. Like EPHB2, functions in axon guidance during development regulating for instance the neurons forming the corpus callosum and the anterior commissure, 2 major interhemispheric connections between the temporal lobes of the cerebral cortex. In addition to its role in axon guidance also plays an important redundant role with other ephrin-B receptors in development and maturation of dendritic spines and the formation of excitatory synapses. Controls other aspects of development through regulation of cell migration and positioning. This includes angiogenesis, palate development and thymic epithelium development for instance. Forward and reverse signaling through the EFNB2/EPHB3 complex also regulate migration and adhesion of cells that tubularize the urethra and septate the cloaca. Finally, plays an important role in intestinal epithelium differentiation segregating progenitor from differentiated cells in the crypt. The protein is Ephrin type-B receptor 3 (Ephb3) of Mus musculus (Mouse).